A 90-amino-acid polypeptide reads, in one-letter code: DNA-directed RNA polymerase subunit omega (90 aa).

The protein belongs to the RNA polymerase subunit omega family. In terms of assembly, the RNAP catalytic core consists of 2 alpha, 1 beta, 1 beta' and 1 omega subunit. When a sigma factor is associated with the core the holoenzyme is formed, which can initiate transcription.

It catalyses the reaction RNA(n) + a ribonucleoside 5'-triphosphate = RNA(n+1) + diphosphate. Promotes RNA polymerase assembly. Latches the N- and C-terminal regions of the beta' subunit thereby facilitating its interaction with the beta and alpha subunits. The polypeptide is DNA-directed RNA polymerase subunit omega (Alteromonas mediterranea (strain DSM 17117 / CIP 110805 / LMG 28347 / Deep ecotype)).